We begin with the raw amino-acid sequence, 505 residues long: Protein nucleotidyltransferase YdiU (505 aa).

ATP contacts are provided by Gly-102, Gly-104, Arg-105, Lys-125, Asp-137, Gly-138, Arg-188, and Arg-195. The active-site Proton acceptor is Asp-264. Residues Asn-265 and Asp-274 each contribute to the Mg(2+) site. Position 274 (Asp-274) interacts with ATP. The tract at residues 485-505 is disordered; sequence FADYGKPPAPGEEVQQTFCGT.

This sequence belongs to the SELO family. Mg(2+) is required as a cofactor. Mn(2+) serves as cofactor.

It catalyses the reaction L-seryl-[protein] + ATP = 3-O-(5'-adenylyl)-L-seryl-[protein] + diphosphate. The enzyme catalyses L-threonyl-[protein] + ATP = 3-O-(5'-adenylyl)-L-threonyl-[protein] + diphosphate. The catalysed reaction is L-tyrosyl-[protein] + ATP = O-(5'-adenylyl)-L-tyrosyl-[protein] + diphosphate. It carries out the reaction L-histidyl-[protein] + UTP = N(tele)-(5'-uridylyl)-L-histidyl-[protein] + diphosphate. It catalyses the reaction L-seryl-[protein] + UTP = O-(5'-uridylyl)-L-seryl-[protein] + diphosphate. The enzyme catalyses L-tyrosyl-[protein] + UTP = O-(5'-uridylyl)-L-tyrosyl-[protein] + diphosphate. In terms of biological role, nucleotidyltransferase involved in the post-translational modification of proteins. It can catalyze the addition of adenosine monophosphate (AMP) or uridine monophosphate (UMP) to a protein, resulting in modifications known as AMPylation and UMPylation. The protein is Protein nucleotidyltransferase YdiU of Nitrobacter hamburgensis (strain DSM 10229 / NCIMB 13809 / X14).